The following is a 273-amino-acid chain: NADPH-dependent 7-cyano-7-deazaguanine reductase (273 aa).

Position 81 to 83 (81 to 83 (VES)) interacts with substrate. An NADPH-binding site is contributed by 83–84 (SK). Residue Cys-179 is the Thioimide intermediate of the active site. The Proton donor role is filled by Asp-186. 218–219 (AE) is a substrate binding site. 247 to 248 (RG) contacts NADPH.

This sequence belongs to the GTP cyclohydrolase I family. QueF type 2 subfamily. As to quaternary structure, homodimer.

It is found in the cytoplasm. It catalyses the reaction 7-aminomethyl-7-carbaguanine + 2 NADP(+) = 7-cyano-7-deazaguanine + 2 NADPH + 3 H(+). It participates in tRNA modification; tRNA-queuosine biosynthesis. Its function is as follows. Catalyzes the NADPH-dependent reduction of 7-cyano-7-deazaguanine (preQ0) to 7-aminomethyl-7-deazaguanine (preQ1). The chain is NADPH-dependent 7-cyano-7-deazaguanine reductase from Rickettsia massiliae (strain Mtu5).